Consider the following 465-residue polypeptide: Intraflagellar transport protein 54 (465 aa).

2 disordered regions span residues 119–301 (VRSN…GFTM) and 347–366 (LHGDGSKKPTGLSTQRDKKP). Residues 144-207 (LEALAREKAE…KQKQQQQQQQ (64 aa)) are a coiled coil. Basic and acidic residues predominate over residues 146–198 (ALAREKAEKERQRREQEQQERERKERERQEKEREEREKHELESRERAEAEQWK). The span at 199–220 (QKQQQQQQQQQSAISPQKSPPK) shows a compositional bias: low complexity. Residues 222 to 242 (RFADDDKTRVEEHQPVIERPH) show a composition bias toward basic and acidic residues.

This sequence belongs to the TRAF3IP1 family.

The protein localises to the cell projection. It is found in the cilium. Its subcellular location is the flagellum. It localises to the cytoplasm. The protein resides in the cytoskeleton. The protein localises to the flagellum axoneme. It is found in the flagellum basal body. Component of the intraflagellar transport complex B (IFT-B) involved in flagellar assembly. This Giardia intestinalis (strain ATCC 50803 / WB clone C6) (Giardia lamblia) protein is Intraflagellar transport protein 54.